The primary structure comprises 151 residues: Hemoglobin-2 (151 aa).

N-acetylthreonine is present on T2. Positions 3–148 (TLTNPQKAAI…ICKTLGDYMK (146 aa)) constitute a Globin domain. A heme b-binding site is contributed by H97.

Belongs to the globin family. As to quaternary structure, homotetramer.

It localises to the cytoplasm. This Phacoides pectinatus (Thick lucine) protein is Hemoglobin-2.